A 575-amino-acid polypeptide reads, in one-letter code: Guanine nucleotide-binding protein-like 3-like protein (575 aa).

A compositionally biased stretch (basic residues) spans 1–30 (MMKLRHKNKKPGKGSKGCKKPAKQNGKKAA). The interval 1-75 (MMKLRHKNKK…AAREQERHRR (75 aa)) is disordered. Residues 9-28 (KKPGKGSKGCKKPAKQNGKK) are required for nucleolar localization. The span at 42–72 (SNDHASREAELKKKRVGEMREKQQAAREQER) shows a compositional bias: basic and acidic residues. The stretch at 51-79 (ELKKKRVGEMREKQQAAREQERHRRRTIE) forms a coiled coil. In terms of domain architecture, CP-type G spans 118 to 303 (YKEFHKVVEY…LLDAPGIVPG (186 aa)). GTP is bound by residues 166 to 169 (NKID), 252 to 259 (GLPNVGKS), and 296 to 299 (DAPG). Lysine 470 is covalently cross-linked (Glycyl lysine isopeptide (Lys-Gly) (interchain with G-Cter in SUMO1)).

It belongs to the TRAFAC class YlqF/YawG GTPase family. Interacts with MDM2; this interaction, which occurs in the nucleoplasm, stabilizes MDM2. Indirectly interacts with TP53, via MDM2-binding. Interacts with TERF1; this interaction probably occurs in the nucleoplasm and is increased during mitosis, when the nucleolus is disassembled. This binding may promote TERF1 homodimerization. Interacts with TERT.

The protein localises to the nucleus. The protein resides in the nucleolus. Its function is as follows. Stabilizes TERF1 telomeric association by preventing TERF1 recruitment by PML. Stabilizes TERF1 protein by preventing its ubiquitination and hence proteasomal degradation. Does so by interfering with TERF1-binding to FBXO4 E3 ubiquitin-protein ligase. Required for cell proliferation. By stabilizing TRF1 protein during mitosis, promotes metaphase-to-anaphase transition. Stabilizes MDM2 protein by preventing its ubiquitination, and hence proteasomal degradation. By acting on MDM2, may affect TP53 activity. Required for normal processing of ribosomal pre-rRNA. Binds GTP. The protein is Guanine nucleotide-binding protein-like 3-like protein (GNL3L) of Bos taurus (Bovine).